We begin with the raw amino-acid sequence, 137 residues long: Nucleoside diphosphate kinase (137 aa).

Positions 10, 58, 86, 92, 103, and 113 each coordinate ATP. The active-site Pros-phosphohistidine intermediate is the His116.

Belongs to the NDK family. Homotetramer. It depends on Mg(2+) as a cofactor.

The protein resides in the cytoplasm. It catalyses the reaction a 2'-deoxyribonucleoside 5'-diphosphate + ATP = a 2'-deoxyribonucleoside 5'-triphosphate + ADP. It carries out the reaction a ribonucleoside 5'-diphosphate + ATP = a ribonucleoside 5'-triphosphate + ADP. Its function is as follows. Major role in the synthesis of nucleoside triphosphates other than ATP. The ATP gamma phosphate is transferred to the NDP beta phosphate via a ping-pong mechanism, using a phosphorylated active-site intermediate. The polypeptide is Nucleoside diphosphate kinase (Helicobacter pylori (strain G27)).